Here is a 237-residue protein sequence, read N- to C-terminus: MADS-box protein GGM13 (237 aa).

Residues 1-61 form the MADS-box domain; it reads MGRGKIEIKR…GKLFEYSSAS (61 aa). Residues 84 to 174 form the K-box domain; that stretch reads NQHLYCEMTR…CRLLAEQQAA (91 aa).

Expression specific for female reproductive structures: strong at the adaxial base of the cupules, where ovules will later develop, then in the outermost cell layer of the nucellus, in the inner envelope, and in the inner half of the middle envelope at late stage of ovule development.

The protein resides in the nucleus. Its function is as follows. Probable transcription factor. The protein is MADS-box protein GGM13 (GGM13) of Gnetum gnemon (Spanish joint-fir).